We begin with the raw amino-acid sequence, 154 residues long: Transcriptional repressor NrdR (154 aa).

The segment at 3–34 (CPFCRHPDSRVVDSREADEGQAIRRRRSCPEC) is a zinc-finger region. The region spanning 46 to 136 (LAVVKRSGVT…VYRGFSSAED (91 aa)) is the ATP-cone domain.

It belongs to the NrdR family. The cofactor is Zn(2+).

Negatively regulates transcription of bacterial ribonucleotide reductase nrd genes and operons by binding to NrdR-boxes. This is Transcriptional repressor NrdR from Mycobacteroides abscessus (strain ATCC 19977 / DSM 44196 / CCUG 20993 / CIP 104536 / JCM 13569 / NCTC 13031 / TMC 1543 / L948) (Mycobacterium abscessus).